Consider the following 82-residue polypeptide: Pigment-dispersing hormone peptides (82 aa).

The N-terminal stretch at 1–26 is a signal peptide; it reads MIGKYLSWFMLAFLFGFVLESYRVQS. Ala-80 is subject to Alanine amide.

Belongs to the arthropod PDH family. Expressed strongly in the head and weakly in the ventral nerve cord. Not detected in the midgut cecum or hindgut. In the cephalic neural complex, specifically localized to cells within the optic lobe, anteromedian protocerebrum, accessory lobe, tritocerebrum, and subesophageal ganglion.

Its subcellular location is the secreted. Functionally, the pigment-dispersing hormone causes the migration of the distal retinal pigment into the proximal end of the pigment chromatophore cells and thus decreases the amount of light entering the retinulas. May also function as a neurotransmitter and/or neuromodulator. This Armadillidium vulgare (Pillbug) protein is Pigment-dispersing hormone peptides.